Reading from the N-terminus, the 243-residue chain is Killer cell lectin-like receptor subfamily I member 1 (243 aa).

Residues 1–80 lie on the Cytoplasmic side of the membrane; sequence MPHSKHRDYT…RQGPKSAVWR (80 aa). 2 consecutive short sequence motifs (ITIM motif) follow at residues 16-21 and 47-52; these read IPYTEL and LKYAEL. The helical; Signal-anchor for type II membrane protein transmembrane segment at 81 to 101 threads the bilayer; it reads VVTCVLGVLCVVLMITMGILV. The Extracellular segment spans residues 102–243; it reads PKLFSGQEEQ…KPYACEFNKM (142 aa). N-linked (GlcNAc...) asparagine glycans are attached at residues N123, N191, N194, N200, and N214. A C-type lectin domain is found at 137 to 239; it reads FGNNFYLFFR…CSSKKPYACE (103 aa). 2 disulfide bridges follow: C158–C238 and C217–C230.

Heterodimer with KLRE1. Interacts with PTPN6. Expressed in natural killer (NK) cells.

It is found in the cell membrane. Its function is as follows. Lectin-like receptor for natural killer (NK) cells. Heterodimer formation with KLRE1 mediates inhibition of NK cell cytolytic activity. The polypeptide is Killer cell lectin-like receptor subfamily I member 1 (Rattus norvegicus (Rat)).